We begin with the raw amino-acid sequence, 244 residues long: Putative lipoprotein LprA (244 aa).

Residues 1 to 24 (MKHPPCSVVAAATAILAVVLAIGG) form the signal peptide. A lipid anchor (N-palmitoyl cysteine) is attached at cysteine 25. Cysteine 25 is lipidated: S-diacylglycerol cysteine.

It belongs to the LppX/LprAFG lipoprotein family.

It localises to the cell membrane. The chain is Putative lipoprotein LprA (lprA) from Mycobacterium bovis (strain ATCC BAA-935 / AF2122/97).